Here is a 465-residue protein sequence, read N- to C-terminus: Argininosuccinate lyase (465 aa).

The protein belongs to the lyase 1 family. Argininosuccinate lyase subfamily.

Its subcellular location is the cytoplasm. The enzyme catalyses 2-(N(omega)-L-arginino)succinate = fumarate + L-arginine. It functions in the pathway amino-acid biosynthesis; L-arginine biosynthesis; L-arginine from L-ornithine and carbamoyl phosphate: step 3/3. The chain is Argininosuccinate lyase from Methylococcus capsulatus (strain ATCC 33009 / NCIMB 11132 / Bath).